Reading from the N-terminus, the 48-residue chain is Small polypeptide DEVIL 19 (48 aa).

Residues Ala-13 to Ile-44 are required for DVL/RTFL small polypeptide activity. Residues Gln-25–Trp-42 traverse the membrane as a helical segment.

It belongs to the DVL/RTFL small polypeptides family.

It localises to the cell membrane. Its function is as follows. Small polypeptide acting as a regulatory molecule which coordinates cellular responses required for differentiation, growth and development, probably by restricting polar cell proliferation in lateral organs and coordinating socket cell recruitment and differentiation at trichome sites. This Arabidopsis thaliana (Mouse-ear cress) protein is Small polypeptide DEVIL 19.